The following is a 1070-amino-acid chain: DNA-directed RNA polymerase subunit beta (1070 aa).

Belongs to the RNA polymerase beta chain family. In plastids the minimal PEP RNA polymerase catalytic core is composed of four subunits: alpha, beta, beta', and beta''. When a (nuclear-encoded) sigma factor is associated with the core the holoenzyme is formed, which can initiate transcription.

The protein resides in the plastid. It localises to the chloroplast. It carries out the reaction RNA(n) + a ribonucleoside 5'-triphosphate = RNA(n+1) + diphosphate. Functionally, DNA-dependent RNA polymerase catalyzes the transcription of DNA into RNA using the four ribonucleoside triphosphates as substrates. This is DNA-directed RNA polymerase subunit beta from Gossypium hirsutum (Upland cotton).